A 189-amino-acid chain; its full sequence is uncharacterized protein (189 aa).

Belongs to the inositol monophosphatase superfamily.

This is an uncharacterized protein from Leptospira biflexa.